The primary structure comprises 234 residues: UDP-2,3-diacylglucosamine hydrolase (234 aa).

Asp-9, His-11, Asp-42, Asn-80, and His-115 together coordinate Mn(2+). Asn-80–Arg-81 is a substrate binding site. The substrate site is built by Asp-123, Ser-161, Lys-165, Lys-168, and His-196. Mn(2+)-binding residues include His-196 and His-198.

This sequence belongs to the LpxH family. Mn(2+) is required as a cofactor.

The protein resides in the cell inner membrane. The catalysed reaction is UDP-2-N,3-O-bis[(3R)-3-hydroxytetradecanoyl]-alpha-D-glucosamine + H2O = 2-N,3-O-bis[(3R)-3-hydroxytetradecanoyl]-alpha-D-glucosaminyl 1-phosphate + UMP + 2 H(+). Its pathway is glycolipid biosynthesis; lipid IV(A) biosynthesis; lipid IV(A) from (3R)-3-hydroxytetradecanoyl-[acyl-carrier-protein] and UDP-N-acetyl-alpha-D-glucosamine: step 4/6. Hydrolyzes the pyrophosphate bond of UDP-2,3-diacylglucosamine to yield 2,3-diacylglucosamine 1-phosphate (lipid X) and UMP by catalyzing the attack of water at the alpha-P atom. Involved in the biosynthesis of lipid A, a phosphorylated glycolipid that anchors the lipopolysaccharide to the outer membrane of the cell. In Histophilus somni (strain 2336) (Haemophilus somnus), this protein is UDP-2,3-diacylglucosamine hydrolase.